The primary structure comprises 911 residues: SH3 and PX domain-containing protein 2B (911 aa).

Positions 5 to 129 (RSIVEVKVLD…QFFETRPEDL (125 aa)) constitute a PX domain. Position 25 is a phosphotyrosine (tyrosine 25). SH3 domains are found at residues 152-211 (MVLE…GQDG) and 221-280 (EEEE…KNSG). Residues 275–366 (LKKNSGEPLP…GLNLPKPPIP (92 aa)) are disordered. Residues serine 279 and serine 291 each carry the phosphoserine modification. Residues 282-292 (PLPPKPGPGSP) show a composition bias toward pro residues. Residues 311-337 (GREKELLSSQRDGRFEGRPVPDGDAKQ) are compositionally biased toward basic and acidic residues. Basic residues predominate over residues 338 to 347 (RSPKMRQRPP). The SH3 3 domain maps to 368 to 427 (QVEEEYYTIAEFQTTIPDGISFQAGLKVEVIEKNLSGWWYIQIEDKEGWAPATFIDKYKK). Residues 458–834 (NTGSEATGPS…GPWGTGKIGE (377 aa)) are disordered. Composition is skewed to basic and acidic residues over residues 486-499 (KDWK…RKAS), 517-548 (EEKP…RTEQ), 571-586 (PARD…DKSR), 598-609 (CGHKVLAKEVKK), and 618-628 (SKTDLPEEKPD). Phosphoserine is present on residues serine 499 and serine 528. Pro residues-rich tracts occupy residues 643 to 653 (RPKPAPSPKTE) and 756 to 766 (VVPPRRPPPPK). The span at 822–831 (GSLGPWGTGK) shows a compositional bias: gly residues. Serine 843 bears the Phosphoserine mark. Residues 850 to 911 (LKDSLYVAVA…IPSNYLRKKP (62 aa)) form the SH3 4 domain.

It belongs to the SH3PXD2 family. As to quaternary structure, interacts with ADAM15. Interacts with NOXO1. Interacts (via SH3 domains) with NOXA1; the interaction is direct. Interacts with FASLG. In terms of processing, phosphorylated in SRC-transformed cells. In terms of tissue distribution, expressed in fibroblasts.

The protein resides in the cytoplasm. It is found in the cell projection. It localises to the podosome. Its function is as follows. Adapter protein involved in invadopodia and podosome formation and extracellular matrix degradation. Binds matrix metalloproteinases (ADAMs), NADPH oxidases (NOXs) and phosphoinositides. Acts as an organizer protein that allows NOX1- or NOX3-dependent reactive oxygen species (ROS) generation and ROS localization. Plays a role in mitotic clonal expansion during the immediate early stage of adipocyte differentiation. The chain is SH3 and PX domain-containing protein 2B (SH3PXD2B) from Homo sapiens (Human).